Consider the following 166-residue polypeptide: Peroxynitrite isomerase Rv2717c (166 aa).

A GXWXGXG motif is present at residues 28-34; that stretch reads GTWRGQG. The heme b site is built by Thr40 and His158.

It belongs to the nitrobindin family. In terms of assembly, homodimer. Heme b is required as a cofactor.

The protein localises to the cytoplasm. The enzyme catalyses peroxynitrite = nitrate. It functions in the pathway nitrogen metabolism. Its function is as follows. Heme-binding protein able to scavenge peroxynitrite and to protect free L-tyrosine against peroxynitrite-mediated nitration, by acting as a peroxynitrite isomerase that converts peroxynitrite to nitrate. Therefore, this protein likely plays a role in peroxynitrite sensing and in the detoxification of reactive nitrogen and oxygen species (RNS and ROS, respectively). Is able to bind nitric oxide (NO) in vitro, but may act as a sensor of peroxynitrite levels in vivo. The protein is Peroxynitrite isomerase Rv2717c of Arabidopsis thaliana (Mouse-ear cress).